A 394-amino-acid chain; its full sequence is Xylose isomerase (394 aa).

Active-site residues include histidine 54 and aspartate 57. Mg(2+) contacts are provided by glutamate 181, glutamate 217, histidine 220, aspartate 245, aspartate 255, aspartate 257, and aspartate 292.

Belongs to the xylose isomerase family. Homotetramer. Requires Mg(2+) as cofactor.

The protein resides in the cytoplasm. It catalyses the reaction alpha-D-xylose = alpha-D-xylulofuranose. The protein is Xylose isomerase (xylA) of Actinoplanes sp. (strain ATCC 31351 / 3876) (Ampullariella sp.).